The following is a 442-amino-acid chain: O-methyltransferase pgmB (442 aa).

Residue Asp291 participates in S-adenosyl-L-methionine binding. His341 (proton acceptor) is an active-site residue.

It belongs to the class I-like SAM-binding methyltransferase superfamily. Cation-independent O-methyltransferase family.

It participates in pigment biosynthesis. It functions in the pathway secondary metabolite biosynthesis. O-methyltransferase; part of the gene cluster that mediates the biosynthesis of pleosporalin A, ascomycone A, as well as a third cryptic naphthoquinone derived pigment, all responsible for the coloration of conidia. Specifically methylates position C-6 of the pgmA product 3-acetonyl-1,6,8-trihydroxy-2-naphthaldehyde to yield fusarubinaldehyde. The pathway begins with the biosynthesis of the cyclized heptaketide 3-acetonyl-1,6,8-trihydroxy-2-naphthaldehyde by the NR-PKS pgmA. The C-6 hydroxyl group is further methylated by the O-methyltransferase pgmB to yield fusarubinaldehyde which is in turn oxidized by the cytochrome P450 monooxygenase pgmC at C-9. The C-1 hydroxyl group is then methylated spontaneously. Although pgmE, pgmD and pgmH are essential for the production of pleosporalin A, it is not the case for the 2 other final products and it remains difficult to assign a specific function to each enzyme. PgmF and pgmG seem not to be involved in pigment biosynthesis although they were regulated by the cluster-specific transcription factor pgmR. This Aspergillus terreus protein is O-methyltransferase pgmB.